The sequence spans 486 residues: Glutamyl-tRNA(Gln) amidotransferase subunit A (486 aa).

Active-site charge relay system residues include Lys78 and Ser153. Ser177 (acyl-ester intermediate) is an active-site residue.

Belongs to the amidase family. GatA subfamily. In terms of assembly, heterotrimer of A, B and C subunits.

It carries out the reaction L-glutamyl-tRNA(Gln) + L-glutamine + ATP + H2O = L-glutaminyl-tRNA(Gln) + L-glutamate + ADP + phosphate + H(+). In terms of biological role, allows the formation of correctly charged Gln-tRNA(Gln) through the transamidation of misacylated Glu-tRNA(Gln) in organisms which lack glutaminyl-tRNA synthetase. The reaction takes place in the presence of glutamine and ATP through an activated gamma-phospho-Glu-tRNA(Gln). This chain is Glutamyl-tRNA(Gln) amidotransferase subunit A, found in Desulfosudis oleivorans (strain DSM 6200 / JCM 39069 / Hxd3) (Desulfococcus oleovorans).